Reading from the N-terminus, the 631-residue chain is MSATKLTRREQRARAQHFIDTLEGTAFPNSKRIYITGTHPGVRVPMREIQLSPTLIGGSKEQPQYEENEAIPVYDTSGPYGDPQIAINVQQGLAKLRQPWIDARGDTEELTVRSSDYTKARLADDGLDELRFSGVLTPKRAKAGRRVTQLHYARQGIITPEMEFIAIRENMGRERIRSEVLRHQHPGMSFGAHLPENITAEFVRDEVAAGRAIIPANINHPESEPMIIGRNFLVKVNANIGNSAVTSSIEEEVEKLVWSTRWGADTVMDLSTGRYIHETREWILRNSPVPIGTVPIYQALEKVNGIAEDLTWEAFRDTLLEQAEQGVDYFTIHAGVLLRYVPMTAKRLTGIVSRGGSIMAKWCLSHHQENFLYQHFREICEICAAYDVSLSLGDGLRPGSIQDANDEAQFAELHTLGELTKIAWEYDVQVMIEGPGHVPMQMIRRNMTKELEHCHEAPFYTLGPLTTDIAPGYDHFTSGIGAAMIGWFGCAMLCYVTPKEHLGLPNKEDVKQGLITYKIAAHAADLAKGHPGAQIRDNAMSKARFEFRWEDQFNLALDPFTARAYHDETLPQESGKVAHFCSMCGPKFCSMKISQEVRDYAATQTIEMGMADMSENFRARGGEIYLRKEEA.

Substrate contacts are provided by residues asparagine 239, methionine 268, tyrosine 297, histidine 333, 353 to 355 (SRG), 394 to 397 (DGLR), and glutamate 433. Zn(2+) is bound at residue histidine 437. Tyrosine 460 serves as a coordination point for substrate. Histidine 501 is a binding site for Zn(2+). Residues cysteine 581, cysteine 584, and cysteine 589 each coordinate [4Fe-4S] cluster.

It belongs to the ThiC family. As to quaternary structure, homodimer. [4Fe-4S] cluster serves as cofactor.

It catalyses the reaction 5-amino-1-(5-phospho-beta-D-ribosyl)imidazole + S-adenosyl-L-methionine = 4-amino-2-methyl-5-(phosphooxymethyl)pyrimidine + CO + 5'-deoxyadenosine + formate + L-methionine + 3 H(+). Its pathway is cofactor biosynthesis; thiamine diphosphate biosynthesis. Catalyzes the synthesis of the hydroxymethylpyrimidine phosphate (HMP-P) moiety of thiamine from aminoimidazole ribotide (AIR) in a radical S-adenosyl-L-methionine (SAM)-dependent reaction. This Escherichia coli O139:H28 (strain E24377A / ETEC) protein is Phosphomethylpyrimidine synthase.